We begin with the raw amino-acid sequence, 474 residues long: Proline--tRNA ligase (474 aa).

This sequence belongs to the class-II aminoacyl-tRNA synthetase family. ProS type 3 subfamily. In terms of assembly, homodimer.

It localises to the cytoplasm. It catalyses the reaction tRNA(Pro) + L-proline + ATP = L-prolyl-tRNA(Pro) + AMP + diphosphate. Catalyzes the attachment of proline to tRNA(Pro) in a two-step reaction: proline is first activated by ATP to form Pro-AMP and then transferred to the acceptor end of tRNA(Pro). In Phytoplasma australiense, this protein is Proline--tRNA ligase.